We begin with the raw amino-acid sequence, 388 residues long: Transcription factor TB1 (388 aa).

A TCP domain is found at 115–173; the sequence is RKDRHSKISTAGGMRDRRMRLSLDVARKFFALQDMLGFDKASKTVQWLLNMSKAAIREI. Disordered stretches follow at residues 180 to 269 and 289 to 331; these read SVCE…EKNR and AAGE…VGVS. A compositionally biased stretch (polar residues) spans 187 to 201; it reads SSSLSVDGKQQQHSN. Basic and acidic residues-rich tracts occupy residues 210–224 and 247–269; these read GDHK…DGKK and VPDK…EKNR. The region spanning 250–267 is the R domain; it reads KESRAKARERARERTKEK. A compositionally biased stretch (low complexity) spans 289 to 314; it reads AAGEDKSPTSPSNNLNHSSSTNLVST.

As to quaternary structure, interacts with MADS57. As to expression, expressed in the axillary bud of the first formed leaf node. Expressed in axillary buds, shoot apical meristem, young leaves, vascular tissues and the tips of crown roots.

The protein localises to the nucleus. Its function is as follows. Probable transcription factor that functions as a negative regulator of lateral branching, presumably through its expression in axillary buds. Involved in the fine tuning of shoot branching. May function as an integrator of multiple signaling pathways to regulate the development of axillary buds. Works partially downstream of strigolactones to inhibit bud outgrowth. Binds to MADS57 to suppress the negative regulation of D14 by MADS57 and balance the expression of D14 for tillering. In Oryza sativa subsp. japonica (Rice), this protein is Transcription factor TB1.